We begin with the raw amino-acid sequence, 436 residues long: Probable glucose-6-phosphate isomerase (436 aa).

Catalysis depends on Glu-272, which acts as the Proton donor. Residues His-293 and Lys-404 contribute to the active site.

This sequence belongs to the GPI family.

The protein localises to the cytoplasm. The catalysed reaction is alpha-D-glucose 6-phosphate = beta-D-fructose 6-phosphate. Its pathway is carbohydrate biosynthesis; gluconeogenesis. It participates in carbohydrate degradation; glycolysis; D-glyceraldehyde 3-phosphate and glycerone phosphate from D-glucose: step 2/4. Catalyzes the reversible isomerization of glucose-6-phosphate to fructose-6-phosphate. The protein is Probable glucose-6-phosphate isomerase of Haloarcula marismortui (strain ATCC 43049 / DSM 3752 / JCM 8966 / VKM B-1809) (Halobacterium marismortui).